The chain runs to 122 residues: Large ribosomal subunit protein uL18 (122 aa).

It belongs to the universal ribosomal protein uL18 family. In terms of assembly, part of the 50S ribosomal subunit; part of the 5S rRNA/L5/L18/L25 subcomplex. Contacts the 5S and 23S rRNAs.

Its function is as follows. This is one of the proteins that bind and probably mediate the attachment of the 5S RNA into the large ribosomal subunit, where it forms part of the central protuberance. The sequence is that of Large ribosomal subunit protein uL18 from Acetivibrio thermocellus (strain ATCC 27405 / DSM 1237 / JCM 9322 / NBRC 103400 / NCIMB 10682 / NRRL B-4536 / VPI 7372) (Clostridium thermocellum).